The sequence spans 471 residues: Maintenance of mitochondrial morphology protein 1 (471 aa).

Over 1 to 21 the chain is Lumenal; that stretch reads MSSPQNTSCPPSQHSLSFTQG. A helical membrane pass occupies residues 22 to 42; that stretch reads LLLGQLSVVLLIGAFIKFFIF. At 43–471 the chain is on the cytoplasmic side; the sequence is GESPSSSSRG…GSLPGAPAVA (429 aa). One can recognise an SMP-LTD domain in the interval 128 to 370; that stretch reads QPESLDWFNV…EPRVQLVALP (243 aa). 3 disordered regions span residues 271–306, 395–415, and 448–471; these read GTTESSPHLPHPENQNESKPSRQDPEIPTNKDGVRS, EDPATKATHSGFTPVNANRDG, and RGDTQSVGEQLRIPGSLPGAPAVA. Positions 280–295 are enriched in basic and acidic residues; the sequence is PHPENQNESKPSRQDP. Residues 401-410 show a composition bias toward polar residues; sequence ATHSGFTPVN.

Belongs to the MMM1 family. In terms of assembly, homodimer. Component of the ER-mitochondria encounter structure (ERMES) or MDM complex, composed of MMM1, MDM10, MDM12 and MDM34. An MMM1 homodimer associates with one molecule of MDM12 on each side in a pairwise head-to-tail manner, and the SMP-LTD domains of MMM1 and MDM12 generate a continuous hydrophobic tunnel for phospholipid trafficking.

The protein localises to the endoplasmic reticulum membrane. Functionally, component of the ERMES/MDM complex, which serves as a molecular tether to connect the endoplasmic reticulum (ER) and mitochondria. Components of this complex are involved in the control of mitochondrial shape and protein biogenesis, and function in nonvesicular lipid trafficking between the ER and mitochondria. The MDM12-MMM1 subcomplex functions in the major beta-barrel assembly pathway that is responsible for biogenesis of all outer membrane beta-barrel proteins, and acts in a late step after the SAM complex. The MDM10-MDM12-MMM1 subcomplex further acts in the TOM40-specific pathway after the action of the MDM12-MMM1 complex. Essential for establishing and maintaining the structure of mitochondria and maintenance of mtDNA nucleoids. The protein is Maintenance of mitochondrial morphology protein 1 of Arthroderma otae (strain ATCC MYA-4605 / CBS 113480) (Microsporum canis).